We begin with the raw amino-acid sequence, 514 residues long: MMTRKRPLALLILDGWGYRENTQKNAVFHANTPVLDQLTAKYPNSLISGSGIDVGLPDGQMGNSEVGHINIGSGRIVYQELTRISKAIDDGEFDTNPTLIKAIDDAIKADAAVHIMGLLSPGGVHSHQDHIEAMCRLSVKRGAKKVYLHAFLDGRDTPPRSAKPGLAHFEELFKTLGTGQVASLIGRYYAMDRDNRWDRVSQAYELITEGKGLHQATSAVEGIEAAYTRDENDEFVGSTAIPDAQGNIIKLEDNDALIFMNFRADRARQITRSFINADFDGFKRAVTPKINFVMLTEYAADIKAAIAYPSSDLVNTLGETLQNRDLTQLRISETEKYAHVTFFFNGGKEEPFKGEDRILVQSPKVATYDLQPEMSSVELTDKLVEAIESTQYDVIICNYPNGDMVGHTGNFDAAVKACEAVDSCIGRIVEALEKVGGECLITADHGNAEQMTDESTGQAHTAHTSELVPLIYVGRDAEIEKGGRLSDLAPTMLTLMGQEVPAEMTGRSIIQLKE.

Asp-14 and Ser-64 together coordinate Mn(2+). Catalysis depends on Ser-64, which acts as the Phosphoserine intermediate. Residues His-125, Arg-155–Asp-156, Arg-187, Arg-193, Arg-263–Arg-266, and Lys-336 each bind substrate. Mn(2+) is bound by residues Asp-403, His-407, Asp-444, His-445, and His-463.

The protein belongs to the BPG-independent phosphoglycerate mutase family. As to quaternary structure, monomer. Requires Mn(2+) as cofactor.

The catalysed reaction is (2R)-2-phosphoglycerate = (2R)-3-phosphoglycerate. The protein operates within carbohydrate degradation; glycolysis; pyruvate from D-glyceraldehyde 3-phosphate: step 3/5. Catalyzes the interconversion of 2-phosphoglycerate and 3-phosphoglycerate. This chain is 2,3-bisphosphoglycerate-independent phosphoglycerate mutase, found in Shewanella halifaxensis (strain HAW-EB4).